The primary structure comprises 396 residues: Schizokinen exporter SchE (396 aa).

Positions 1–25 are cleaved as a signal peptide; that stretch reads MLPKLILLATLYISQFIPTTFFIQA. Residues 26–39 lie on the Cytoplasmic side of the membrane; it reads LPVFMRQQKMSLDV. A helical membrane pass occupies residues 40–60; it reads IGFLGLLILPSGLKFLWSPFI. Over 61–73 the chain is Periplasmic; the sequence is DRYRLGKLGHYRG. The chain crosses the membrane as a helical span at residues 74-94; sequence WIICFQLLLISTMLVTAFIDI. The Cytoplasmic segment spans residues 95 to 104; sequence QDNLNAFLTC. Residues 105 to 127 traverse the membrane as a helical segment; the sequence is MFLASLFSSSQDIATDALAVNLL. Residues 128–137 are Periplasmic-facing; the sequence is EPQERGLGNA. A helical transmembrane segment spans residues 138-158; it reads IQSGGNIFGAIIGGGVMLILL. Residues 159 to 162 lie on the Cytoplasmic side of the membrane; that stretch reads DKIG. Residues 163-183 traverse the membrane as a helical segment; it reads WRYSLITLSIFMLINLVPILI. Topologically, residues 184–214 are periplasmic; sequence YREKSQHQLENSTFFRSYFQPFISFLSRPKA. The helical transmembrane segment at 215-235 threads the bilayer; the sequence is LPWLFVVLLYMMGDSVTSLMI. Over 236–251 the chain is Cytoplasmic; it reads RPLLVDRGLSLPDIGW. A helical transmembrane segment spans residues 252 to 272; the sequence is ILGIVSYSARIVSALIAGLVI. The Periplasmic portion of the chain corresponds to 273–281; it reads VKLGRIKSL. A helical transmembrane segment spans residues 282-302; that stretch reads IIFGFIADLTTLLYIIPAIGV. Residues 303–304 lie on the Cytoplasmic side of the membrane; that stretch reads SS. Residues 305-325 form a helical membrane-spanning segment; sequence LLVLYTVCIIVNATQSMAYTA. The Periplasmic portion of the chain corresponds to 326–346; the sequence is LLSAMMDKCEKNTAATDYTMQ. Helical transmembrane passes span 347 to 367 and 368 to 388; these read VSVMFLGGIAATVLSGMLATT and MGYSFIFIMSAAVSLLSVFLI. Residues 389–396 lie on the Periplasmic side of the membrane; that stretch reads TQEYGVSS.

The protein belongs to the major facilitator superfamily.

Its subcellular location is the cell inner membrane. Its function is as follows. Involved in the TolC-like protein HgdD-dependent secretion of schizokinen, a dihydroxamate-type siderophore. Transports schizokinen from the cytoplasm to the periplasm. In Nostoc sp. (strain PCC 7120 / SAG 25.82 / UTEX 2576), this protein is Schizokinen exporter SchE.